Here is a 196-residue protein sequence, read N- to C-terminus: Proteasome subunit beta 1 (196 aa).

The propeptide at 1–6 is removed in mature form; by autocatalysis; sequence MEELPA. Thr7 acts as the Nucleophile in catalysis.

Belongs to the peptidase T1B family. As to quaternary structure, the 20S proteasome core is composed of 14 alpha and 14 beta subunits that assemble into four stacked heptameric rings, resulting in a barrel-shaped structure. The two inner rings, each composed of seven catalytic beta subunits, are sandwiched by two outer rings, each composed of seven alpha subunits. The catalytic chamber with the active sites is on the inside of the barrel. Has a gated structure, the ends of the cylinder being occluded by the N-termini of the alpha-subunits. Is capped at one or both ends by the proteasome regulatory ATPase, PAN.

Its subcellular location is the cytoplasm. The catalysed reaction is Cleavage of peptide bonds with very broad specificity.. The formation of the proteasomal ATPase PAN-20S proteasome complex, via the docking of the C-termini of PAN into the intersubunit pockets in the alpha-rings, triggers opening of the gate for substrate entry. Interconversion between the open-gate and close-gate conformations leads to a dynamic regulation of the 20S proteasome proteolysis activity. Its function is as follows. Component of the proteasome core, a large protease complex with broad specificity involved in protein degradation. This chain is Proteasome subunit beta 1, found in Saccharolobus solfataricus (strain ATCC 35092 / DSM 1617 / JCM 11322 / P2) (Sulfolobus solfataricus).